Here is a 264-residue protein sequence, read N- to C-terminus: uncharacterized protein (264 aa).

6 helical membrane-spanning segments follow: residues M1–L21, F43–V63, V95–L115, I146–L166, G181–V201, and I215–P235.

The protein to M.pneumoniae MPN_308 C-terminal region.

It localises to the cell membrane. This is an uncharacterized protein from Mycoplasma pneumoniae (strain ATCC 29342 / M129 / Subtype 1) (Mycoplasmoides pneumoniae).